The sequence spans 607 residues: Sulfite reductase [NADPH] flavoprotein alpha-component (607 aa).

Residues 66 to 204 (VTILYGSQTG…AAGQWHADVL (139 aa)) form the Flavodoxin-like domain. Residues 72–77 (SQTGNG), 119–122 (STHG), and 155–164 (LGDSSYEFFC) each bind FMN. The FAD-binding FR-type domain occupies 239–456 (QNPYRAEVLV…VEPNKHFRLP (218 aa)). Residues Thr327, Leu361, 395-398 (RLYS), 413-415 (TVA), and 428-431 (GGAS) contribute to the FAD site. Residues 527–528 (SR), 533–537 (KIYVQ), and Asp569 each bind NADP(+). Position 607 (Tyr607) interacts with FAD.

This sequence belongs to the NADPH-dependent sulphite reductase flavoprotein subunit CysJ family. It in the N-terminal section; belongs to the flavodoxin family. The protein in the C-terminal section; belongs to the flavoprotein pyridine nucleotide cytochrome reductase family. In terms of assembly, alpha(8)-beta(8). The alpha component is a flavoprotein, the beta component is a hemoprotein. The cofactor is FAD. Requires FMN as cofactor.

It catalyses the reaction hydrogen sulfide + 3 NADP(+) + 3 H2O = sulfite + 3 NADPH + 4 H(+). The protein operates within sulfur metabolism; hydrogen sulfide biosynthesis; hydrogen sulfide from sulfite (NADPH route): step 1/1. In terms of biological role, component of the sulfite reductase complex that catalyzes the 6-electron reduction of sulfite to sulfide. This is one of several activities required for the biosynthesis of L-cysteine from sulfate. The flavoprotein component catalyzes the electron flow from NADPH -&gt; FAD -&gt; FMN to the hemoprotein component. The chain is Sulfite reductase [NADPH] flavoprotein alpha-component from Shewanella oneidensis (strain ATCC 700550 / JCM 31522 / CIP 106686 / LMG 19005 / NCIMB 14063 / MR-1).